The primary structure comprises 572 residues: Urease subunit alpha (572 aa).

The 439-residue stretch at 134 to 572 (GGIDAHVHMI…VSLGQLYFFS (439 aa)) folds into the Urease domain. 3 residues coordinate Ni(2+): His-139, His-141, and Lys-222. Residue Lys-222 is modified to N6-carboxylysine. His-224 contributes to the substrate binding site. Ni(2+)-binding residues include His-251 and His-277. The active-site Proton donor is the His-325. Ni(2+) is bound at residue Asp-365.

Belongs to the metallo-dependent hydrolases superfamily. Urease alpha subunit family. Heterotrimer of UreA (gamma), UreB (beta) and UreC (alpha) subunits. Three heterotrimers associate to form the active enzyme. Ni cation is required as a cofactor. In terms of processing, carboxylation allows a single lysine to coordinate two nickel ions.

It localises to the cytoplasm. The catalysed reaction is urea + 2 H2O + H(+) = hydrogencarbonate + 2 NH4(+). Its pathway is nitrogen metabolism; urea degradation; CO(2) and NH(3) from urea (urease route): step 1/1. The polypeptide is Urease subunit alpha (Laribacter hongkongensis (strain HLHK9)).